A 325-amino-acid chain; its full sequence is Probable pectate lyase B (325 aa).

The N-terminal stretch at 1–15 (MRLPTLFMLAAIATA) is a signal peptide. Aspartate 132, aspartate 161, and aspartate 165 together coordinate Ca(2+). Residue arginine 218 is part of the active site.

This sequence belongs to the polysaccharide lyase 1 family. Ca(2+) is required as a cofactor.

It is found in the secreted. It carries out the reaction Eliminative cleavage of (1-&gt;4)-alpha-D-galacturonan to give oligosaccharides with 4-deoxy-alpha-D-galact-4-enuronosyl groups at their non-reducing ends.. In terms of biological role, pectinolytic enzyme consist of four classes of enzymes: pectin lyase, polygalacturonase, pectin methylesterase and rhamnogalacturonase. Among pectinolytic enzymes, pectin lyase is the most important in depolymerization of pectin, since it cleaves internal glycosidic bonds of highly methylated pectins. Favors pectate, the anion, over pectin, the methyl ester. The polypeptide is Probable pectate lyase B (plyB) (Aspergillus terreus (strain NIH 2624 / FGSC A1156)).